Reading from the N-terminus, the 425-residue chain is Protein let-756 (425 aa).

Disordered regions lie at residues 277–298 (LEEK…LRKE) and 314–425 (EEEL…QRYP). Residues 281-291 (KRRREKKKRRR) show a composition bias toward basic residues. Residues 329–340 (ASTQTRYNRPQN) are compositionally biased toward polar residues. Positions 378–389 (HNSHHHHHHHPR) are enriched in basic residues. The span at 395–425 (DPQQRHQSQQHYLAQTVSNPNRQNVNYQRYP) shows a compositional bias: polar residues.

It belongs to the heparin-binding growth factors family. In terms of assembly, interacts with pal-1. In terms of tissue distribution, expressed in pharynx, CAN neuron and body wall muscles.

The protein resides in the nucleus. It is found in the membrane. Its function is as follows. Required for larval development. Probably by binding receptor egl-15, negatively regulates membrane protrusion from body wall muscles during larval development. The chain is Protein let-756 (let-756) from Caenorhabditis elegans.